The primary structure comprises 36 residues: Neuropeptide F (36 aa).

Phenylalanine amide is present on Phe36.

Belongs to the NPY family. In terms of tissue distribution, central and peripheral nervous system, and muscular pharynx.

It is found in the secreted. May perform an important neurotransmitter function and may regulate muscular activity. This is Neuropeptide F from Arthurdendyus triangulatus (New Zealand flatworm).